Here is a 317-residue protein sequence, read N- to C-terminus: Transaldolase A (317 aa).

Lysine 132 acts as the Schiff-base intermediate with substrate in catalysis.

This sequence belongs to the transaldolase family. Type 1 subfamily. Homodimer.

The protein localises to the cytoplasm. The catalysed reaction is D-sedoheptulose 7-phosphate + D-glyceraldehyde 3-phosphate = D-erythrose 4-phosphate + beta-D-fructose 6-phosphate. It participates in carbohydrate degradation; pentose phosphate pathway; D-glyceraldehyde 3-phosphate and beta-D-fructose 6-phosphate from D-ribose 5-phosphate and D-xylulose 5-phosphate (non-oxidative stage): step 2/3. Its function is as follows. Transaldolase is important for the balance of metabolites in the pentose-phosphate pathway. This Pasteurella multocida (strain Pm70) protein is Transaldolase A (talA).